The sequence spans 309 residues: 2-dehydro-3-deoxygluconokinase (309 aa).

Substrate-binding positions include 28–32, Y88, 102–104, and R170; these read GDTLN and YWR. Residues 168–170, 228–233, and 261–264 contribute to the ATP site; these read NYR, KRGADS, and AAGD. A substrate-binding site is contributed by D264. Catalysis depends on D264, which acts as the Proton acceptor.

Belongs to the carbohydrate kinase pfkB family.

The enzyme catalyses 2-dehydro-3-deoxy-D-gluconate + ATP = 2-dehydro-3-deoxy-6-phospho-D-gluconate + ADP + H(+). It functions in the pathway carbohydrate acid metabolism; 2-dehydro-3-deoxy-D-gluconate degradation; D-glyceraldehyde 3-phosphate and pyruvate from 2-dehydro-3-deoxy-D-gluconate: step 1/2. In terms of biological role, catalyzes the phosphorylation of 2-keto-3-deoxygluconate (KDG) to produce 2-keto-3-deoxy-6-phosphogluconate (KDPG). The sequence is that of 2-dehydro-3-deoxygluconokinase (kdgK) from Escherichia coli (strain ATCC 9637 / CCM 2024 / DSM 1116 / LMG 11080 / NBRC 13500 / NCIMB 8666 / NRRL B-766 / W).